A 296-amino-acid polypeptide reads, in one-letter code: N-acetylmuramic acid 6-phosphate etherase 2 (296 aa).

The SIS domain maps to 55–218 (IIKSFNQGGR…STISMIGIGK (164 aa)). Glutamate 83 (proton donor) is an active-site residue. Glutamate 114 is an active-site residue.

It belongs to the GCKR-like family. MurNAc-6-P etherase subfamily. Homodimer.

It carries out the reaction N-acetyl-D-muramate 6-phosphate + H2O = N-acetyl-D-glucosamine 6-phosphate + (R)-lactate. Its pathway is amino-sugar metabolism; N-acetylmuramate degradation. Functionally, specifically catalyzes the cleavage of the D-lactyl ether substituent of MurNAc 6-phosphate, producing GlcNAc 6-phosphate and D-lactate. This Enterococcus faecalis (strain ATCC 700802 / V583) protein is N-acetylmuramic acid 6-phosphate etherase 2.